The following is a 122-amino-acid chain: Small ribosomal subunit protein uS13 (122 aa).

The interval 96-122 (PVRGQRTRTNARTRKGPKKTVGVRRAK) is disordered.

This sequence belongs to the universal ribosomal protein uS13 family. In terms of assembly, part of the 30S ribosomal subunit. Forms a loose heterodimer with protein S19. Forms two bridges to the 50S subunit in the 70S ribosome.

In terms of biological role, located at the top of the head of the 30S subunit, it contacts several helices of the 16S rRNA. In the 70S ribosome it contacts the 23S rRNA (bridge B1a) and protein L5 of the 50S subunit (bridge B1b), connecting the 2 subunits; these bridges are implicated in subunit movement. Contacts the tRNAs in the A and P-sites. The chain is Small ribosomal subunit protein uS13 from Halothermothrix orenii (strain H 168 / OCM 544 / DSM 9562).